The sequence spans 49 residues: uncharacterized protein (49 aa).

The disordered stretch occupies residues Met1–Ile49. Positions Asn9–Glu18 are enriched in basic and acidic residues.

This is an uncharacterized protein from Dictyostelium discoideum (Social amoeba).